A 314-amino-acid polypeptide reads, in one-letter code: uncharacterized protein (314 aa).

10 helical membrane-spanning segments follow: residues 4 to 23, 36 to 53, 68 to 90, 97 to 116, 131 to 153, 174 to 196, 200 to 222, 229 to 251, 261 to 283, and 290 to 309; these read FFIGDLLPIIVIMLLGYFSG, FNKLVLNYALPAALFVSI, TLVSLVVIVGCFFFSWFGCYKFF, AAVCALIAGSPTIGFLGFAV, VAIISIIVNAITIPIGLYLLNPS, PVVWAPVLATILVLVGVKIPAAW, FNLIAKANSGVAVFAAGLTLAAH, EIAYNTFLKLILMPLALLLVGMA, MMVLAGALPPAFSGIIIASRFNV, and ASLAVSVLGFVVTAPLWIYV.

This sequence belongs to the auxin efflux carrier (TC 2.A.69) family.

The protein resides in the cell membrane. This is an uncharacterized protein from Escherichia coli O157:H7.